The chain runs to 499 residues: RNA polymerase sigma factor SigA (499 aa).

2 stretches are compositionally biased toward basic residues: residues M1–Q12 and K77–A87. Disordered stretches follow at residues M1 to E25 and Q68 to L89. A sigma-70 factor domain-2 region spans residues L252–T322. Positions D276 to Q279 match the Interaction with polymerase core subunit RpoC motif. The sigma-70 factor domain-3 stretch occupies residues E331 to F412. The tract at residues L425 to Q480 is sigma-70 factor domain-4. Positions L453 to T472 form a DNA-binding region, H-T-H motif.

The protein belongs to the sigma-70 factor family. RpoD/SigA subfamily. In terms of assembly, interacts transiently with the RNA polymerase catalytic core.

It is found in the cytoplasm. Its function is as follows. Sigma factors are initiation factors that promote the attachment of RNA polymerase to specific initiation sites and are then released. This sigma factor is the primary sigma factor during exponential growth. This chain is RNA polymerase sigma factor SigA, found in Mycoplasma pneumoniae (strain ATCC 29342 / M129 / Subtype 1) (Mycoplasmoides pneumoniae).